The following is a 597-amino-acid chain: Aspartate--tRNA ligase (597 aa).

Residue E180 coordinates L-aspartate. The aspartate stretch occupies residues 204-207; the sequence is QLFK. R226 provides a ligand contact to L-aspartate. ATP is bound by residues 226-228 and Q235; that span reads RDE. H454 lines the L-aspartate pocket. E488 lines the ATP pocket. L-aspartate is bound at residue R495. 540–543 contacts ATP; the sequence is GLDR.

This sequence belongs to the class-II aminoacyl-tRNA synthetase family. Type 1 subfamily. In terms of assembly, homodimer.

It is found in the cytoplasm. It carries out the reaction tRNA(Asp) + L-aspartate + ATP = L-aspartyl-tRNA(Asp) + AMP + diphosphate. Catalyzes the attachment of L-aspartate to tRNA(Asp) in a two-step reaction: L-aspartate is first activated by ATP to form Asp-AMP and then transferred to the acceptor end of tRNA(Asp). The sequence is that of Aspartate--tRNA ligase from Clostridium perfringens (strain SM101 / Type A).